Consider the following 602-residue polypeptide: Protein SHORT-ROOT 1 (602 aa).

The span at 12–55 (AASEQQQQQQQSASYNSRSTTSSGSRSSSHQTNASYSYYHHSSN) shows a compositional bias: low complexity. Disordered stretches follow at residues 12 to 69 (AASE…YYYG), 101 to 145 (DFSS…TAAG), and 165 to 185 (DFSS…AVGG). A compositionally biased stretch (gly residues) spans 56–68 (SGGGGGGGGGYYY). Residues 122–145 (PPASSTPTGTAPTPPLSTSSTAAG) are compositionally biased toward low complexity. Residues 173–185 (SGGGTASSGAVGG) are compositionally biased toward gly residues. Residues 183–601 (VGGGGGGRWA…QPLVWASAWR (419 aa)) form the GRAS domain. The interval 190-253 (RWASQLLLEC…LTASGPRTLR (64 aa)) is leucine repeat I (LRI). The interval 272–349 (ALRFQELSPW…PHLSITTVVS (78 aa)) is VHIID. Positions 311 to 315 (FHILD) match the VHIID motif. The leucine repeat II (LRII) stretch occupies residues 365–401 (EIGQRMEKFARLMGVPFRFRAVHHSGDLAELDLDALD). The segment at 411–517 (LAVNCVNSLR…ERGAGRAIVD (107 aa)) is PFYRE. Positions 520–601 (SCPASESMER…QPLVWASAWR (82 aa)) are SAW.

The protein belongs to the GRAS family. In terms of assembly, interacts with SCR1. Interacts with SMOS1. As to expression, expressed in leaves and roots. Detected in the stele, the endodermis and part of the cortex.

Its subcellular location is the nucleus. Functionally, transcription factor required for the asymmetric cell division involved in radial pattern formation in roots. Essential for both cell division and cell specification. This chain is Protein SHORT-ROOT 1, found in Oryza sativa subsp. japonica (Rice).